The primary structure comprises 180 residues: Trafficking protein particle complex subunit 3 (180 aa).

C68 is lipidated: S-palmitoyl cysteine.

The protein belongs to the TRAPP small subunits family. BET3 subfamily. As to quaternary structure, homodimer. Component of the multisubunit transport protein particle (TRAPP) complex, which includes at least TRAPPC2, TRAPPC2L, TRAPPC3, TRAPPC3L, TRAPPC4, TRAPPC5, TRAPPC8, TRAPPC9, TRAPPC10, TRAPPC11 and TRAPPC12. Heterodimer with TRAPPC6A. The heterodimer TRAPPC3-TRAPPC6A interacts with TRAPPC2L. Heterodimer with TRAPPC6b. The heterodimer TRAPPC6B-TRAPPC3 interacts with TRAPPC1 likely providing a core for TRAPP complex formation.

The protein resides in the golgi apparatus. The protein localises to the cis-Golgi network. Its subcellular location is the endoplasmic reticulum. Functionally, may play a role in vesicular transport from endoplasmic reticulum to Golgi. The chain is Trafficking protein particle complex subunit 3 from Homo sapiens (Human).